The following is a 296-amino-acid chain: Small ribosomal subunit protein uS2 (296 aa).

A disordered region spans residues Thr252–Thr296.

Belongs to the universal ribosomal protein uS2 family.

This chain is Small ribosomal subunit protein uS2 (rpsB), found in Rickettsia prowazekii (strain Madrid E).